Here is a 212-residue protein sequence, read N- to C-terminus: Peptide methionine sulfoxide reductase MsrA (212 aa).

Residue C52 is part of the active site.

Belongs to the MsrA Met sulfoxide reductase family.

The catalysed reaction is L-methionyl-[protein] + [thioredoxin]-disulfide + H2O = L-methionyl-(S)-S-oxide-[protein] + [thioredoxin]-dithiol. It carries out the reaction [thioredoxin]-disulfide + L-methionine + H2O = L-methionine (S)-S-oxide + [thioredoxin]-dithiol. Its function is as follows. Has an important function as a repair enzyme for proteins that have been inactivated by oxidation. Catalyzes the reversible oxidation-reduction of methionine sulfoxide in proteins to methionine. The protein is Peptide methionine sulfoxide reductase MsrA of Shigella boydii serotype 18 (strain CDC 3083-94 / BS512).